Reading from the N-terminus, the 174-residue chain is ATP-dependent protease subunit HslV (174 aa).

T2 is a catalytic residue. Na(+) is bound by residues G159, D162, and T165.

The protein belongs to the peptidase T1B family. HslV subfamily. In terms of assembly, a double ring-shaped homohexamer of HslV is capped on each side by a ring-shaped HslU homohexamer. The assembly of the HslU/HslV complex is dependent on binding of ATP.

Its subcellular location is the cytoplasm. The catalysed reaction is ATP-dependent cleavage of peptide bonds with broad specificity.. Its activity is regulated as follows. Allosterically activated by HslU binding. In terms of biological role, protease subunit of a proteasome-like degradation complex believed to be a general protein degrading machinery. The polypeptide is ATP-dependent protease subunit HslV (Lacticaseibacillus casei (strain BL23) (Lactobacillus casei)).